We begin with the raw amino-acid sequence, 298 residues long: MQLEKMITEGSNAASAEIDRVSTLEMCRIINDEDKTVPLAVERVLPDIAAAIDVIHAQVSGGGRLIYLGAGTSGRLGILDASECPPTYGVKPGLVVGLIAGGEYAIQHAVEGAEDSREGGVNDLKNIGLTAQDVVVGIAASGRTPYVIAGLEYARQLGCRTVGISCNPGSAVSTTAEFAITPVVGAEVVTGSSRMKAGTAQKLVLNMLSTGLMIKSGKVFGNLMVDVVATNEKLHVRQVNIVKNATGCNAEQAEAALIACERNCKTAIVMVLKNLDAAEAKKRLDQHGGFIRQVLDKE.

The 164-residue stretch at 55–218 folds into the SIS domain; the sequence is IHAQVSGGGR…STGLMIKSGK (164 aa). Residue Glu83 is the Proton donor of the active site. The active site involves Glu114.

It belongs to the GCKR-like family. MurNAc-6-P etherase subfamily. As to quaternary structure, homodimer.

The enzyme catalyses N-acetyl-D-muramate 6-phosphate + H2O = N-acetyl-D-glucosamine 6-phosphate + (R)-lactate. The protein operates within amino-sugar metabolism; 1,6-anhydro-N-acetylmuramate degradation. Its pathway is amino-sugar metabolism; N-acetylmuramate degradation. It functions in the pathway cell wall biogenesis; peptidoglycan recycling. In terms of biological role, specifically catalyzes the cleavage of the D-lactyl ether substituent of MurNAc 6-phosphate, producing GlcNAc 6-phosphate and D-lactate. Together with AnmK, is also required for the utilization of anhydro-N-acetylmuramic acid (anhMurNAc) either imported from the medium or derived from its own cell wall murein, and thus plays a role in cell wall recycling. The sequence is that of N-acetylmuramic acid 6-phosphate etherase from Escherichia coli O157:H7 (strain EC4115 / EHEC).